A 154-amino-acid polypeptide reads, in one-letter code: MTGSNQPSDCYLAALRLLTGRDYTCAALRRKLQQKRFAAEEAQQAVERLIREGYLQDQRYAERLVAAVRQNGSFTGYRLQQELRRRGVPPELIDQVLRESPADGDELERARHLVERRYAGFDPQAADERQLRRVAGFLQRRGYRSDLIRQLFEK.

This sequence belongs to the RecX family.

The protein resides in the cytoplasm. Modulates RecA activity. This Trichlorobacter lovleyi (strain ATCC BAA-1151 / DSM 17278 / SZ) (Geobacter lovleyi) protein is Regulatory protein RecX.